The primary structure comprises 447 residues: Methionine aminopeptidase 2 (447 aa).

Residues 1–86 are disordered; sequence MAGATEGEDT…KNKKKKKKKI (86 aa). A compositionally biased stretch (basic and acidic residues) spans 8–32; that stretch reads EDTKVIESKINELNIDKPKLEDNNE. The span at 43-60 shows a compositional bias: acidic residues; the sequence is GGDDDDDKEDDDDNDEIT. The segment covering 71–86 has biased composition (basic residues); the sequence is KKKKKNKNKKKKKKKI. H198 lines the substrate pocket. A divalent metal cation-binding residues include D218, D229, and H300. A substrate-binding site is contributed by H308. A divalent metal cation is bound by residues E333 and E428.

Belongs to the peptidase M24A family. Methionine aminopeptidase eukaryotic type 2 subfamily. It depends on Co(2+) as a cofactor. Zn(2+) is required as a cofactor. The cofactor is Mn(2+). Requires Fe(2+) as cofactor.

The protein resides in the cytoplasm. It catalyses the reaction Release of N-terminal amino acids, preferentially methionine, from peptides and arylamides.. Its function is as follows. Cotranslationally removes the N-terminal methionine from nascent proteins. The N-terminal methionine is often cleaved when the second residue in the primary sequence is small and uncharged (Met-Ala-, Cys, Gly, Pro, Ser, Thr, or Val). The protein is Methionine aminopeptidase 2 of Candida albicans (strain WO-1) (Yeast).